Consider the following 166-residue polypeptide: Vasopressin-neurophysin 2-copeptin (166 aa).

Positions 1 to 19 (MPDATLPACFLSLLAFTSA) are cleaved as a signal peptide. Cys20 and Cys25 are disulfide-bonded. At Gly28 the chain carries Glycine amide. 7 cysteine pairs are disulfide-bonded: Cys41–Cys85, Cys44–Cys58, Cys52–Cys75, Cys59–Cys65, Cys92–Cys104, Cys98–Cys116, and Cys105–Cys110. N-linked (GlcNAc...) asparagine glycosylation occurs at Asn133.

Belongs to the vasopressin/oxytocin family. In terms of assembly, interacts with vasopressin receptors V1bR/AVPR1B (Ki=85 pM), V1aR/AVPR1A (Ki=0.6 nM) and V2R/AVPR2 (Ki=4.9 nM). Interacts with oxytocin receptor (OXTR) (Ki=110 nM).

The protein resides in the secreted. Functionally, neurophysin 2 specifically binds vasopressin. In terms of biological role, vasopressin has a direct antidiuretic action on the kidney, it also causes vasoconstriction of the peripheral vessels. Acts by binding to vasopressin receptors (V1bR/AVPR1B, V1aR/AVPR1A, and V2R/AVPR2). In Bos taurus (Bovine), this protein is Vasopressin-neurophysin 2-copeptin (AVP).